Consider the following 600-residue polypeptide: MKKQLRSSFSTQGRRMAGARALWAANGMKKNQMGKPIIAIVNSFTQFVPGHVHLHEIGQLVKAEIEKLGCFAAEFNTIAIDDGIAMGHDGMLYSLPSRDIIADSVEYMVNAHKADAMVCISNCDKITPGMLMAAMRLNIPTVFVSGGPMEAGEWNGQHLDLIDAMIKSADDSVSDQEVANIEQNACPTCGCCSGMFTANSMNCLNEAIGLALPGNGTIVATHENRTKLFEDAAKLIVENAMKYYEEGDESVLPRSIATRQAFLNAMTLDIAMGGSTNTVLHLLAVAHEAGVDFKMDDIDMLSRKTPCLCKVAPNTQKYHIQDVNRAGGIIAILAELAKGGLIDTSVLRVDGMSLAEAIDQYSITSPNVTEKAMSKYSSAAGNRFNLVLGSQGAYYQELDKDRANGCIRDLEHAYSKDGGLAVLKGNIAQDGCVVKTAGVDESIWKFTGPAKVFDSQEAACEGILGGRVVSGDVVVITHEGPKGGPGMQEMLYPTSYIKSRHLGKECALITDGRFSGGTSGLSIGHVSPEAAAGGNIGKIVDGDIIEIDIPARTINVRLTDEELAARPMTPVTRDRYVPKSLKAYASMVSSADKGAVRLID.

Asp82 provides a ligand contact to Mg(2+). A [2Fe-2S] cluster-binding site is contributed by Cys123. Mg(2+) is bound by residues Asp124 and Lys125. N6-carboxylysine is present on Lys125. Residue Cys192 coordinates [2Fe-2S] cluster. Glu489 serves as a coordination point for Mg(2+). The active-site Proton acceptor is Ser515.

Belongs to the IlvD/Edd family. As to quaternary structure, homodimer. Requires [2Fe-2S] cluster as cofactor. The cofactor is Mg(2+).

The enzyme catalyses (2R)-2,3-dihydroxy-3-methylbutanoate = 3-methyl-2-oxobutanoate + H2O. The catalysed reaction is (2R,3R)-2,3-dihydroxy-3-methylpentanoate = (S)-3-methyl-2-oxopentanoate + H2O. It participates in amino-acid biosynthesis; L-isoleucine biosynthesis; L-isoleucine from 2-oxobutanoate: step 3/4. The protein operates within amino-acid biosynthesis; L-valine biosynthesis; L-valine from pyruvate: step 3/4. Its function is as follows. Functions in the biosynthesis of branched-chain amino acids. Catalyzes the dehydration of (2R,3R)-2,3-dihydroxy-3-methylpentanoate (2,3-dihydroxy-3-methylvalerate) into 2-oxo-3-methylpentanoate (2-oxo-3-methylvalerate) and of (2R)-2,3-dihydroxy-3-methylbutanoate (2,3-dihydroxyisovalerate) into 2-oxo-3-methylbutanoate (2-oxoisovalerate), the penultimate precursor to L-isoleucine and L-valine, respectively. This Bacteroides thetaiotaomicron (strain ATCC 29148 / DSM 2079 / JCM 5827 / CCUG 10774 / NCTC 10582 / VPI-5482 / E50) protein is Dihydroxy-acid dehydratase.